A 1050-amino-acid polypeptide reads, in one-letter code: Sucrose-phosphate synthase 4 (1050 aa).

A disordered region spans residues 134 to 167 (QGRNDAEEDLLSELSEGEKDKNDGEKEKSEVVTT). Ser-148 carries the phosphoserine modification. Residues 149–163 (EGEKDKNDGEKEKSE) show a composition bias toward basic and acidic residues. At Ser-180 the chain carries Phosphoserine.

Belongs to the glycosyltransferase 1 family. As to quaternary structure, homodimer or homotetramer.

The enzyme catalyses beta-D-fructose 6-phosphate + UDP-alpha-D-glucose = sucrose 6(F)-phosphate + UDP + H(+). The protein operates within glycan biosynthesis; sucrose biosynthesis; sucrose from D-fructose 6-phosphate and UDP-alpha-D-glucose: step 1/2. Its activity is regulated as follows. Activity is regulated by phosphorylation and moderated by concentration of metabolites and light. Functionally, plays a role in photosynthetic sucrose synthesis by catalyzing the rate-limiting step of sucrose biosynthesis from UDP-glucose and fructose- 6-phosphate. Involved in the regulation of carbon partitioning in the leaves of plants. May regulate the synthesis of sucrose and therefore play a major role as a limiting factor in the export of photoassimilates out of the leaf. Plays a role for sucrose availability that is essential for plant growth and fiber elongation. In Arabidopsis thaliana (Mouse-ear cress), this protein is Sucrose-phosphate synthase 4.